The sequence spans 228 residues: Cytochrome b5 domain-containing protein 1 (228 aa).

Residues 17 to 83 (RRYFTPSEVA…DPQTRDIRKH (67 aa)) enclose the Cytochrome b5 heme-binding domain. Residue His-83 coordinates heme.

This sequence belongs to the cytochrome b5 family.

The protein localises to the cytoplasm. It is found in the cytoskeleton. Its subcellular location is the cilium axoneme. In terms of biological role, radial spoke stalk protein that binds heme under oxidizing conditions. Required for the coordinated beating of multiple cilia maybe by functioning in a redox signaling pathway. The protein is Cytochrome b5 domain-containing protein 1 (Cyb5d1) of Mus musculus (Mouse).